Consider the following 112-residue polypeptide: Large ribosomal subunit protein eL30y (112 aa).

It belongs to the eukaryotic ribosomal protein eL30 family.

The sequence is that of Large ribosomal subunit protein eL30y (RPL30B) from Arabidopsis thaliana (Mouse-ear cress).